Reading from the N-terminus, the 289-residue chain is Putative transmembrane protein ORF289 (289 aa).

The Extracellular portion of the chain corresponds to methionine 1–threonine 152. The helical transmembrane segment at leucine 153 to leucine 173 threads the bilayer. Residues lysine 174–asparagine 234 lie on the Cytoplasmic side of the membrane. A helical membrane pass occupies residues alanine 235–tyrosine 255. At serine 256–threonine 289 the chain is on the extracellular side.

The protein localises to the host membrane. The chain is Putative transmembrane protein ORF289 from Acidianus sp. F28 (AFV-2).